A 66-amino-acid polypeptide reads, in one-letter code: ARDGYIVHDGTNCKYSCEFGSEYKYCGPLCEKKKAKTGYCYLFACWCIEVPDEVRVWGEDGFMCWS.

In terms of domain architecture, LCN-type CS-alpha/beta spans 2-65 (RDGYIVHDGT…VWGEDGFMCW (64 aa)). 4 disulfide bridges follow: C13–C64, C17–C40, C26–C45, and C30–C47.

This sequence belongs to the long (4 C-C) scorpion toxin superfamily. Sodium channel inhibitor family. Beta subfamily. In terms of tissue distribution, expressed by the venom gland.

It localises to the secreted. This protein is not toxic. In Androctonus australis (Sahara scorpion), this protein is Neurotoxin-like protein STR1.